The following is a 117-amino-acid chain: MAQNSVSLSAGDQANRMAHRSSQGDLNPSAMAWAMVSGDSFLVTRLDPNQPGPRPPARPSVRADRRRVPVGGRSRSRSRQGRFSPYPIPGVKLDLLRSVLQQRLVALGTALATRISA.

The segment covering M1–D12 has biased composition (polar residues). 2 disordered regions span residues M1–A30 and V43–P87.

This is an uncharacterized protein from Mus musculus (Mouse).